Here is a 559-residue protein sequence, read N- to C-terminus: Protein aurora borealis (559 aa).

The interval 1-27 (MGDVKESKMQITPETPGRIPVLNPFES) is disordered. 5 positions are modified to phosphoserine: serine 183, serine 191, serine 270, serine 325, and serine 331. At threonine 354 the chain carries Phosphothreonine.

Belongs to the BORA family. Interacts with AURKA. Phosphorylated by AURKA.

In terms of biological role, required for the activation of AURKA at the onset of mitosis. The polypeptide is Protein aurora borealis (BORA) (Homo sapiens (Human)).